We begin with the raw amino-acid sequence, 570 residues long: Urease subunit alpha (570 aa).

Positions 131–570 (GGMDSHIHFI…LPMAQRYFLF (440 aa)) constitute a Urease domain. Residues histidine 136, histidine 138, and lysine 219 each coordinate Ni(2+). The residue at position 219 (lysine 219) is an N6-carboxylysine. A substrate-binding site is contributed by histidine 221. Residues histidine 248 and histidine 274 each contribute to the Ni(2+) site. The active-site Proton donor is histidine 322. Position 362 (aspartate 362) interacts with Ni(2+).

Belongs to the metallo-dependent hydrolases superfamily. Urease alpha subunit family. Heterotrimer of UreA (gamma), UreB (beta) and UreC (alpha) subunits. Three heterotrimers associate to form the active enzyme. The cofactor is Ni cation. Post-translationally, carboxylation allows a single lysine to coordinate two nickel ions.

It localises to the cytoplasm. The catalysed reaction is urea + 2 H2O + H(+) = hydrogencarbonate + 2 NH4(+). Its pathway is nitrogen metabolism; urea degradation; CO(2) and NH(3) from urea (urease route): step 1/1. In Sinorhizobium fredii (strain NBRC 101917 / NGR234), this protein is Urease subunit alpha.